Consider the following 317-residue polypeptide: Transaldolase (317 aa).

Lys132 (schiff-base intermediate with substrate) is an active-site residue.

It belongs to the transaldolase family. Type 1 subfamily. As to quaternary structure, homodimer.

Its subcellular location is the cytoplasm. The enzyme catalyses D-sedoheptulose 7-phosphate + D-glyceraldehyde 3-phosphate = D-erythrose 4-phosphate + beta-D-fructose 6-phosphate. The protein operates within carbohydrate degradation; pentose phosphate pathway; D-glyceraldehyde 3-phosphate and beta-D-fructose 6-phosphate from D-ribose 5-phosphate and D-xylulose 5-phosphate (non-oxidative stage): step 2/3. In terms of biological role, transaldolase is important for the balance of metabolites in the pentose-phosphate pathway. This chain is Transaldolase (talB), found in Escherichia coli O104:H4 (strain 2009EL-2071).